The sequence spans 447 residues: Acidic leucine-rich nuclear phosphoprotein 32-related protein (447 aa).

3 LRR repeats span residues 49 to 70 (NLQH…PRLG), 71 to 90 (NLQK…EFLV), and 96 to 117 (SFCD…APLA). The 39-residue stretch at 129–167 (CPVTRLKDYRSRVFGLIKTLKYLDKTDAEGNERPESDDE) folds into the LRRCT domain. Residues 155–447 (DAEGNERPES…EDDDDDDEER (293 aa)) are disordered. 2 stretches are compositionally biased toward acidic residues: residues 163-194 (ESDD…EIDG) and 215-231 (VDVD…DESE). Positions 232 to 242 (QATGVNGTSYR) are enriched in polar residues. 5 stretches are compositionally biased toward acidic residues: residues 256–277 (VRED…DNDV), 284–309 (EDSE…EEVD), 336–374 (GDDD…EESG), 397–415 (PINE…DDLP), and 433–447 (DDDD…DEER).

The protein belongs to the ANP32 family.

The sequence is that of Acidic leucine-rich nuclear phosphoprotein 32-related protein from Arabidopsis thaliana (Mouse-ear cress).